The sequence spans 270 residues: uncharacterized protein (270 aa).

Disordered regions lie at residues 35 to 67 (IKQD…GGNK) and 168 to 204 (SNNN…DNSN). Over residues 39–48 (NNNNNNNNTN) the composition is skewed to low complexity. Residues 49–67 (VSLSPSIKSQATSSTGGNK) are compositionally biased toward polar residues. The segment covering 168–191 (SNNNNNNNNNNNNNNNNNNNNNNN) has biased composition (low complexity).

This is an uncharacterized protein from Dictyostelium discoideum (Social amoeba).